The chain runs to 427 residues: Kallistatin (427 aa).

Positions Met1–Gly20 are cleaved as a signal peptide. Residues Asn33, Asn108, Asn157, and Asn238 are each glycosylated (N-linked (GlcNAc...) asparagine).

The protein belongs to the serpin family. In terms of assembly, monomer and some homodimers.

The protein localises to the secreted. In terms of biological role, inhibits human amidolytic and kininogenase activities of tissue kallikrein. This is Kallistatin (SERPINA4) from Pongo abelii (Sumatran orangutan).